The chain runs to 470 residues: Methylenetetrahydrofolate--tRNA-(uracil-5-)-methyltransferase TrmFO (470 aa).

FAD is bound at residue 10-15 (GAGLAG).

Belongs to the MnmG family. TrmFO subfamily. Requires FAD as cofactor.

The protein resides in the cytoplasm. It carries out the reaction uridine(54) in tRNA + (6R)-5,10-methylene-5,6,7,8-tetrahydrofolate + NADH + H(+) = 5-methyluridine(54) in tRNA + (6S)-5,6,7,8-tetrahydrofolate + NAD(+). The enzyme catalyses uridine(54) in tRNA + (6R)-5,10-methylene-5,6,7,8-tetrahydrofolate + NADPH + H(+) = 5-methyluridine(54) in tRNA + (6S)-5,6,7,8-tetrahydrofolate + NADP(+). Functionally, catalyzes the folate-dependent formation of 5-methyl-uridine at position 54 (M-5-U54) in all tRNAs. The protein is Methylenetetrahydrofolate--tRNA-(uracil-5-)-methyltransferase TrmFO of Prochlorococcus marinus (strain MIT 9215).